The primary structure comprises 117 residues: Large ribosomal subunit protein bL20 (117 aa).

The protein belongs to the bacterial ribosomal protein bL20 family.

Its function is as follows. Binds directly to 23S ribosomal RNA and is necessary for the in vitro assembly process of the 50S ribosomal subunit. It is not involved in the protein synthesizing functions of that subunit. The chain is Large ribosomal subunit protein bL20 from Wigglesworthia glossinidia brevipalpis.